We begin with the raw amino-acid sequence, 348 residues long: Rhodopsin (348 aa).

Methionine 1 is modified (N-acetylmethionine). Over 1–36 (MNGTEGPNFYVPFSNKTGVVRSPFEAPQYYLAEPWQ) the chain is Extracellular. N-linked (GlcNAc...) asparagine glycans are attached at residues asparagine 2 and asparagine 15. The helical transmembrane segment at 37-61 (FSMLAAYMFLLIMLGFPINFLTLYV) threads the bilayer. The Cytoplasmic segment spans residues 62–73 (TVQHKKLRTPLN). A helical membrane pass occupies residues 74 to 96 (YILLNLAVADLFMVFGGFTTTLY). Residues 97–110 (TSLHGYFVFGPTGC) lie on the Extracellular side of the membrane. A disulfide bond links cysteine 110 and cysteine 187. Residues 111 to 133 (NLEGFFATLGGEIALWSLVVLAI) form a helical membrane-spanning segment. Residues 134 to 136 (ERY) carry the 'Ionic lock' involved in activated form stabilization motif. Residues 134 to 152 (ERYVVVCKPMSNFRFGENH) are Cytoplasmic-facing. Residues 153–173 (AIMGVAFTWVMALACAAPPLV) traverse the membrane as a helical segment. Residues 174-202 (GWSRYIPEGMQCSCGIDYYTPHEETNNES) lie on the Extracellular side of the membrane. A Zn(2+)-binding site is contributed by glutamate 201. Residues 203–224 (FVIYMFVVHFIIPLIVIFFCYG) traverse the membrane as a helical segment. Residues 225-252 (QLVFTVKEAAAQQQESATTQKAEKEVTR) lie on the Cytoplasmic side of the membrane. The helical transmembrane segment at 253–274 (MVIIMVIAFLICWLPYAGVAFY) threads the bilayer. Residues 275–286 (IFTHQGSDFGPI) are Extracellular-facing. Position 279 (glutamine 279) interacts with Zn(2+). Residues 287–308 (FMTIPAFFAKTSAVYNPVIYIM) traverse the membrane as a helical segment. Residue lysine 296 is modified to N6-(retinylidene)lysine. Topologically, residues 309-348 (MNKQFRNCMVTTLCCGKNPLGDDEASTTVSKTETSQVAPA) are cytoplasmic. 2 S-palmitoyl cysteine lipidation sites follow: cysteine 322 and cysteine 323. The interval 330-348 (DDEASTTVSKTETSQVAPA) is interaction with SAG. The residue at position 334 (serine 334) is a Phosphoserine. A phosphothreonine mark is found at threonine 335 and threonine 336. Position 338 is a phosphoserine (serine 338). Threonine 340 and threonine 342 each carry phosphothreonine. Position 343 is a phosphoserine; by RK and GRK7 (serine 343).

It belongs to the G-protein coupled receptor 1 family. Opsin subfamily. In terms of assembly, homodimer. May form a complex composed of RHO, GRK1 and RCVRN in a Ca(2+)-dependent manner; RCVRN prevents the interaction between GRK1 and RHO. Interacts with GRK1. Interacts (phosphorylated form) with SAG. Interacts with GNAT1. Interacts with GNAT3. SAG and G-proteins compete for a common binding site. Interacts with PRCD; the interaction promotes PRCD stability. Forms a complex with ASAP1 and ARF4. Forms a complex with ASAP1, RAB11A, Rabin8/RAB3IP, ARF4 and RAB11FIP3; the complex regulates Golgi-to-cilia rhodopsin/RHO transport in photoreceptors. Post-translationally, phosphorylated on some or all of the serine and threonine residues present in the C-terminal region. In terms of processing, contains one covalently linked retinal chromophore. Upon light absorption, the covalently bound 11-cis-retinal is converted to all-trans-retinal. After hydrolysis of the Schiff base and release of the covalently bound all-trans-retinal, active rhodopsin is regenerated by binding of a fresh molecule of 11-cis-retinal. Expressed in rod-shaped photoreceptor cells in the retina that mediate vision in dim light (at protein level).

Its subcellular location is the membrane. The protein localises to the cell projection. The protein resides in the cilium. It is found in the photoreceptor outer segment. Photoreceptor required for image-forming vision at low light intensity. Required for photoreceptor cell viability after birth. Light-induced isomerization of 11-cis to all-trans retinal triggers a conformational change that activates signaling via G-proteins. Subsequent receptor phosphorylation mediates displacement of the bound G-protein alpha subunit by the arrestin SAG and terminates signaling. This Bos taurus (Bovine) protein is Rhodopsin (RHO).